A 212-amino-acid chain; its full sequence is Peptide methionine sulfoxide reductase MsrA (212 aa).

The active site involves Cys52.

This sequence belongs to the MsrA Met sulfoxide reductase family.

It carries out the reaction L-methionyl-[protein] + [thioredoxin]-disulfide + H2O = L-methionyl-(S)-S-oxide-[protein] + [thioredoxin]-dithiol. The catalysed reaction is [thioredoxin]-disulfide + L-methionine + H2O = L-methionine (S)-S-oxide + [thioredoxin]-dithiol. Its function is as follows. Has an important function as a repair enzyme for proteins that have been inactivated by oxidation. Catalyzes the reversible oxidation-reduction of methionine sulfoxide in proteins to methionine. The polypeptide is Peptide methionine sulfoxide reductase MsrA (Shigella boydii serotype 18 (strain CDC 3083-94 / BS512)).